The sequence spans 333 residues: Putative ketol-acid reductoisomerase 2 (333 aa).

Positions 1 to 182 (MDKTVLDANL…AIPGGIAVIS (182 aa)) constitute a KARI N-terminal Rossmann domain. The KARI C-terminal knotted domain occupies 183-329 (SFEEEALLDL…KELYKLLGRK (147 aa)).

This sequence belongs to the ketol-acid reductoisomerase family.

It carries out the reaction (2R)-2,3-dihydroxy-3-methylbutanoate + NADP(+) = (2S)-2-acetolactate + NADPH + H(+). The catalysed reaction is (2R,3R)-2,3-dihydroxy-3-methylpentanoate + NADP(+) = (S)-2-ethyl-2-hydroxy-3-oxobutanoate + NADPH + H(+). The protein operates within amino-acid biosynthesis; L-isoleucine biosynthesis; L-isoleucine from 2-oxobutanoate: step 2/4. Its pathway is amino-acid biosynthesis; L-valine biosynthesis; L-valine from pyruvate: step 2/4. In Saccharolobus solfataricus (strain ATCC 35092 / DSM 1617 / JCM 11322 / P2) (Sulfolobus solfataricus), this protein is Putative ketol-acid reductoisomerase 2 (ilvC2).